Consider the following 161-residue polypeptide: Nucleotide-binding protein Pnuc_0290 (161 aa).

Belongs to the YajQ family.

Functionally, nucleotide-binding protein. The chain is Nucleotide-binding protein Pnuc_0290 from Polynucleobacter asymbioticus (strain DSM 18221 / CIP 109841 / QLW-P1DMWA-1) (Polynucleobacter necessarius subsp. asymbioticus).